The following is a 58-amino-acid chain: Large ribosomal subunit protein bL32c (58 aa).

A compositionally biased stretch (basic residues) spans methionine 1–glutamine 19. Positions methionine 1–serine 25 are disordered.

The protein belongs to the bacterial ribosomal protein bL32 family.

The protein resides in the plastid. It is found in the chloroplast. This chain is Large ribosomal subunit protein bL32c (rpl32), found in Chlorella vulgaris (Green alga).